A 459-amino-acid chain; its full sequence is MVHERWKTVGSASQLEDRPRDKPQRASCSYVLCTVLLSLAVLLAVAVTGVVLFLNHTHTPGTAPPPIVSTGTAGANSALVTVERADSSHLSLLIDPRCPDLTDSFARLEGIQASILRALSEHQAQPRLDGAPELLDALADQLPRLLTRASELQAECAGLRKGHSLLGQGLSTLQSEQGRLIQLLSESQGHMAHLVNSVSDVLEALQRERGLGRPRVKADLQRAPSRGARPRGCANGSRPRDCLDVLLSGQQDDGVYSIFPTHYPAGFQVYCDMRTDGGGWTVFQRREDGSVNFFRGWEAYREGFGKLTGEHWLGLKRIHALTTQAAYELHVDLEDFDNGTAYAHYGSFGVGLFSVDPEEDGYPLTVADYSGTAGDSLLKHSGMRFTTKDRDSDHSENNCAAFYRGAWWYRNCHTSNLNGQYLRGAHASYADGVEWSSWTGWQYSLKFSEMKIRPVREDR.

Residues 1–22 are disordered; it reads MVHERWKTVGSASQLEDRPRDK. Topologically, residues 1–33 are cytoplasmic; sequence MVHERWKTVGSASQLEDRPRDKPQRASCSYVLC. A helical; Signal-anchor for type II membrane protein membrane pass occupies residues 34–54; it reads TVLLSLAVLLAVAVTGVVLFL. The Extracellular segment spans residues 55–459; the sequence is NHTHTPGTAP…MKIRPVREDR (405 aa). Residues 233-456 enclose the Fibrinogen C-terminal domain; sequence CANGSRPRDC…FSEMKIRPVR (224 aa). Cys-242 and Cys-271 are joined by a disulfide. Asn-338 carries N-linked (GlcNAc...) asparagine glycosylation. Ca(2+)-binding residues include Asp-391 and Asp-393. A disulfide bridge links Cys-399 with Cys-412.

As to quaternary structure, homotetramer; disulfide-linked.

It is found in the membrane. In terms of biological role, acetyl group-binding receptor which shows a high-affinity and calcium-dependent binding to acetylated structures such as chitin, some N-acetylated carbohydrates, and amino acids, but not to their non-acetylated counterparts. Can facilitate the endocytosis of acetylated components. The protein is Fibrinogen C domain-containing protein 1 (Fibcd1) of Mus musculus (Mouse).